Here is a 182-residue protein sequence, read N- to C-terminus: Adenylate kinase (182 aa).

Residue Gly12 to Thr17 coordinates ATP. The NMP stretch occupies residues Ser32 to Val61. Residues Thr33, Arg38, Glu59–Val61, Gly85–Arg88, and Gln92 each bind AMP. An LID region spans residues Glu126–Asp132. Arg127 contributes to the ATP binding site. The AMP site is built by Arg129 and Arg140. Ala168 provides a ligand contact to ATP.

The protein belongs to the adenylate kinase family. In terms of assembly, monomer.

The protein resides in the cytoplasm. It carries out the reaction AMP + ATP = 2 ADP. It functions in the pathway purine metabolism; AMP biosynthesis via salvage pathway; AMP from ADP: step 1/1. Functionally, catalyzes the reversible transfer of the terminal phosphate group between ATP and AMP. Plays an important role in cellular energy homeostasis and in adenine nucleotide metabolism. This Prochlorococcus marinus (strain NATL1A) protein is Adenylate kinase.